A 128-amino-acid polypeptide reads, in one-letter code: Aspartate 1-decarboxylase (128 aa).

Residue S25 is the Schiff-base intermediate with substrate; via pyruvic acid of the active site. Pyruvic acid (Ser) is present on S25. Position 57 (T57) interacts with substrate. Residue Y58 is the Proton donor of the active site. Substrate is bound at residue 73-75; that stretch reads GAA.

This sequence belongs to the PanD family. As to quaternary structure, heterooctamer of four alpha and four beta subunits. Pyruvate serves as cofactor. In terms of processing, is synthesized initially as an inactive proenzyme, which is activated by self-cleavage at a specific serine bond to produce a beta-subunit with a hydroxyl group at its C-terminus and an alpha-subunit with a pyruvoyl group at its N-terminus.

It localises to the cytoplasm. The enzyme catalyses L-aspartate + H(+) = beta-alanine + CO2. It functions in the pathway cofactor biosynthesis; (R)-pantothenate biosynthesis; beta-alanine from L-aspartate: step 1/1. Functionally, catalyzes the pyruvoyl-dependent decarboxylation of aspartate to produce beta-alanine. This Caldicellulosiruptor bescii (strain ATCC BAA-1888 / DSM 6725 / KCTC 15123 / Z-1320) (Anaerocellum thermophilum) protein is Aspartate 1-decarboxylase.